Consider the following 144-residue polypeptide: Transcription antitermination protein NusB (144 aa).

It belongs to the NusB family.

Involved in transcription antitermination. Required for transcription of ribosomal RNA (rRNA) genes. Binds specifically to the boxA antiterminator sequence of the ribosomal RNA (rrn) operons. The protein is Transcription antitermination protein NusB of Paraburkholderia xenovorans (strain LB400).